A 157-amino-acid polypeptide reads, in one-letter code: MGIIDFLLALMQDMILSAIPAVGFAMVFNVPHRALPWCALLGALGHGLRMLMMSAGFNIEWSTFMASLLVGSIGIQWSRWYLAHPKVFTVAAVIPMFPGISAYTAMISAVKISHLGYSEPMMITLLTNFLKASSIVGALSIGLSVPGLWLYRKRPRV.

5 consecutive transmembrane segments (helical) span residues 8-28 (LALM…AMVF), 34-54 (ALPW…LMMS), 55-75 (AGFN…SIGI), 87-107 (VFTV…TAMI), and 129-149 (FLKA…PGLW).

The protein belongs to the ThrE exporter (TC 2.A.79) family. In terms of assembly, the transporter is composed of YjjB and YjjP.

Its subcellular location is the cell inner membrane. Its function is as follows. Involved in succinate export with YjjP. Both proteins are required for export. The sequence is that of Probable succinate transporter subunit YjjB from Salmonella typhi.